A 723-amino-acid polypeptide reads, in one-letter code: Epidermal growth factor receptor kinase substrate 8-like protein 1 (723 aa).

One can recognise a PTB domain in the interval Gln-35–Glu-164. A compositionally biased stretch (basic and acidic residues) spans Arg-162–Pro-183. Disordered stretches follow at residues Arg-162–Pro-247, Lys-442–Glu-477, Gly-537–Pro-589, and Leu-609–Ala-636. Ser-182 is modified (phosphoserine). A Phosphothreonine modification is found at Thr-187. Residues Thr-478–Gly-537 form the SH3 domain. Polar residues predominate over residues Ser-543–Ser-552. Residues Thr-553–Leu-568 are compositionally biased toward pro residues. Residues Pro-571–Ser-580 are compositionally biased toward basic and acidic residues. Residues Val-689–Glu-719 are a coiled coil.

Belongs to the EPS8 family. Interacts with ABI1. Part of a complex that contains SOS1, ABI1 and EPS8L2. Associates with F-actin. As to expression, detected in placenta.

The protein resides in the cytoplasm. Stimulates guanine exchange activity of SOS1. May play a role in membrane ruffling and remodeling of the actin cytoskeleton. This chain is Epidermal growth factor receptor kinase substrate 8-like protein 1 (EPS8L1), found in Homo sapiens (Human).